Here is a 116-residue protein sequence, read N- to C-terminus: Small ribosomal subunit protein uS13 (116 aa).

The disordered stretch occupies residues 92–116 (RRGLPVRGQNTKNNARTRKGAKRSR). Over residues 106–116 (ARTRKGAKRSR) the composition is skewed to basic residues.

The protein belongs to the universal ribosomal protein uS13 family. In terms of assembly, part of the 30S ribosomal subunit. Forms a loose heterodimer with protein S19. Forms two bridges to the 50S subunit in the 70S ribosome.

Functionally, located at the top of the head of the 30S subunit, it contacts several helices of the 16S rRNA. In the 70S ribosome it contacts the 23S rRNA (bridge B1a) and protein L5 of the 50S subunit (bridge B1b), connecting the 2 subunits; these bridges are implicated in subunit movement. Contacts the tRNAs in the A and P-sites. This Lactobacillus delbrueckii subsp. bulgaricus (strain ATCC 11842 / DSM 20081 / BCRC 10696 / JCM 1002 / NBRC 13953 / NCIMB 11778 / NCTC 12712 / WDCM 00102 / Lb 14) protein is Small ribosomal subunit protein uS13.